The primary structure comprises 174 residues: Shikimate kinase 2 (174 aa).

12-17 (GAGKTT) is an ATP binding site. 2 residues coordinate Mg(2+): Thr-16 and Asp-32. Positions 34, 58, and 79 each coordinate substrate. Residues 112–126 (AEDPEDAQRPSLTGK) form an LID domain region. Position 120 (Arg-120) interacts with ATP. Arg-139 contributes to the substrate binding site. Gln-155 contributes to the ATP binding site.

The protein belongs to the shikimate kinase family. AroL subfamily. As to quaternary structure, monomer. It depends on Mg(2+) as a cofactor.

The protein localises to the cytoplasm. It carries out the reaction shikimate + ATP = 3-phosphoshikimate + ADP + H(+). It functions in the pathway metabolic intermediate biosynthesis; chorismate biosynthesis; chorismate from D-erythrose 4-phosphate and phosphoenolpyruvate: step 5/7. In terms of biological role, catalyzes the specific phosphorylation of the 3-hydroxyl group of shikimic acid using ATP as a cosubstrate. The protein is Shikimate kinase 2 of Yersinia enterocolitica serotype O:8 / biotype 1B (strain NCTC 13174 / 8081).